We begin with the raw amino-acid sequence, 358 residues long: Metacaspase-3 (358 aa).

The tract at residues 1–84 (MGFDFGCLLK…APTHVSGTFR (84 aa)) is important for catalytic activity. Active-site residues include histidine 168 and cysteine 223.

Belongs to the peptidase C14B family. Post-translationally, in epimastigotes, the unprocessed enzyme appears to be the main form. Auto-processing is dispensable for catalytic activity towards small oligopeptide substrates.

It localises to the cytoplasm. It is found in the nucleus. Activated by Ca(2+). In terms of biological role, cysteine protease that cleaves specifically after arginine or lysine residues. In epimastigotes, may play a role in cell cycle G1/S transition. The polypeptide is Metacaspase-3 (Trypanosoma cruzi (strain CL Brener)).